A 157-amino-acid polypeptide reads, in one-letter code: MFDVLMYLFETYIHTEAELRVDQDKLEQDLTDAGFDREDIYNALLWLEKLADYQEGLAEPMQLASDPLSMRIYTPEECERLDASCRGFLLFLEQIQVLNLETREMVIERVLALDTAEFDLEDLKWVILMVLFNIPGCENAYQQMEELLFEVNEGMLH.

It belongs to the Smg family.

The chain is Protein Smg from Escherichia coli O139:H28 (strain E24377A / ETEC).